The primary structure comprises 409 residues: Protein naked cuticle homolog 2 (409 aa).

The N-myristoyl glycine moiety is linked to residue G2. An EF-hand domain is found at 109–144 (AEDNRQEWVFTLYDFDNSGKVTKEDMSSLMHTIYDV). 5 residues coordinate Ca(2+): D122, D124, S126, K128, and D133. Disordered stretches follow at residues 160–224 (LRVK…YCVD), 243–315 (TSRF…RYPG), 346–366 (SHTH…RIRS), and 388–409 (RHEH…YHQT). Basic and acidic residues-rich tracts occupy residues 171-185 (AARR…RETS) and 193-224 (VRSE…YCVD). Positions 247–268 (DSSSPDADQDPPSRSSHSQSRP) are enriched in low complexity. Basic residues predominate over residues 389-409 (HEHHHHHEHHHHHHYHHYHQT).

This sequence belongs to the NKD family. As to expression, expressed ubiquitously until 1 dpf, when expression becomes confined to the anterior CNS, with slight expression in the developing tail.

The protein resides in the cell membrane. It is found in the cytoplasm. Its function is as follows. Cell autonomous antagonist of both the canonical and non-canonical Wnt signaling pathways. The polypeptide is Protein naked cuticle homolog 2 (nkd2) (Danio rerio (Zebrafish)).